Here is an 835-residue protein sequence, read N- to C-terminus: MKVLALRHSVAQVYADTQIYIHDETKDDYENAFFISNLTTHNILYLNYSVKTLQILNKSGIAAVEIQKMDKLFTLIRCNFTYDYIDDVVYLHDYSYYTNNEIRTDQHWVTKTNIEDYLLPGWKLTYVGYNGNDTRGHYNFSFKCQNAATDDDAIIEYIYSNELDFQNFILKKIKERMTTSLPIARLSNRVFRDKLFKTLVSDHSKIVNVGPRNESMFTFLDHPSIKQFSNGPYLVKDTIKLKQERWLGKRLSQFDIGQYKNYVKCINNLISIYDMYHEKPIIYMLGSAPSYWIHDVKQYSNLKFETWDPLDTPYSDLHHKELFYISDVTKLKDNSILYIDIRTDRENADWKTWRKIVEEQTVNNLNIAYKYLSTGKAKVCCVKMTAMDLELPISAKLLHHPTTEIRSEFYLIMDIWDSKNIKRFIPKGVLYSYINNIITENVFIQQPFKLKTLRNEYVVALYALSNDFNNREDVIKLINNQKNALITVRINNTFKDEPKVGFKDIYDWTFLPTDFETNESIITSYDGCLGVFGLSISLASKPTGNNHLFMLSGTNKYFNMDQFANHMSISRRSHQIRFSESATSYSGYIFRDLSNNNFNLIGTNVENSVSGHVYNALIYYRYNYSFDLKRWIYLHSTNKASIEGGRYYEHAPIELIYACRSAREFAKLQDDLTVLRYSNEIENYINKVYSITYADDPNYFIGIKFKNIPYEYDVKVPHLTFGVLNISDSMVPDVVVILKKFKSELFRMDVTTSYTYMLSDEIYVANVSGVLSTYFKLYNAFYKEQITFGQSRMFIPHITLSFSNKKVVRIDSTRLNIDFIYLRKIKGDTVFDMAE.

Positions 171-245 (KKIKERMTTS…KDTIKLKQER (75 aa)) are N7-methyltransferase activity. Residues 246 to 428 (WLGKRLSQFD…KNIKRFIPKG (183 aa)) form a 2'-O-methyltransferase activity region. Positions 429–555 (VLYSYINNII…NHLFMLSGTN (127 aa)) are N7-methyltransferase activity. A GTase/RTPase activity region spans residues 556–692 (KYFNMDQFAN…NYINKVYSIT (137 aa)). The tract at residues 693-835 (YADDPNYFIG…KGDTVFDMAE (143 aa)) is 2'-5'-phosphodiesterase activity. Active-site for 2'-5'-phosphodiesterase activity residues include histidine 718, threonine 720, histidine 797, and threonine 799.

The protein belongs to the rotavirus VP3 family. In terms of assembly, interacts with VP1. Interacts with VP2.

It localises to the virion. It catalyses the reaction a 5'-end diphospho-ribonucleoside in mRNA + GTP + H(+) = a 5'-end (5'-triphosphoguanosine)-ribonucleoside in mRNA + diphosphate. The enzyme catalyses a 5'-end (5'-triphosphoguanosine)-ribonucleoside in mRNA + S-adenosyl-L-methionine = a 5'-end (N(7)-methyl 5'-triphosphoguanosine)-ribonucleoside in mRNA + S-adenosyl-L-homocysteine. It carries out the reaction 5'-triphosphoadenylyl-(2'-&gt;5')-adenylyl-(2'-&gt;5')-adenosine + 2 H2O = 2 AMP + ATP + 2 H(+). Multifunctional enzyme involved in mRNA capping. Catalyzes the formation of the 5' cap structure on the viral plus-strand transcripts. Specifically binds to GTP and displays guanylyltransferase and methyltransferase activities. Has affinity for ssRNA but not for dsRNA. Capping activity is non-specific and caps RNAs that initiate with either a G or an A residue. Together with VP1 polymerase, forms a VP1-VP3 complex positioned near the channels situated at each of the five-fold vertices of the core. Following infection, the outermost layer of the virus is lost, leaving a double-layered particle (DLP) made up of the core and VP6 shell. VP1 then catalyzes the transcription of fully conservative plus-strand genomic RNAs that are capped by VP3 and extruded through the DLP's channels into the cytoplasm where they function as mRNAs for translation of viral proteins. DLPs probably have an RNA triphosphatase activity as well, whereas open cores do not. Functionally, counteracts the host innate immune response thanks to its phosphodiesterase that degrades the 5'-triphosphorylated, 2'-5' linked adenylate oligomers produced by the host cell IFN-inducible 2',5'-oligoadenylate synthetase (OAS). The host RNaseL is therefore not activated. This is Protein VP3 from Rotavirus A (strain RVA/Cow/United Kingdom/UK/1975/G6P7[5]) (RV-A).